Here is a 24-residue protein sequence, read N- to C-terminus: Potassium channel toxin alpha-KTx 6 OcyKTx5 (24 aa).

Residues C3 and C24 are joined by a disulfide bond.

The protein belongs to the short scorpion toxin superfamily. Potassium channel inhibitor family. Alpha-KTx 06 subfamily. As to expression, expressed by the venom gland.

The protein localises to the secreted. Its function is as follows. Blocks voltage-gated potassium channels. This is Potassium channel toxin alpha-KTx 6 OcyKTx5 from Opisthacanthus cayaporum (South American scorpion).